The chain runs to 970 residues: Protein translocase subunit SecA (970 aa).

ATP-binding positions include Gln-99, 117–121 (GEGKT), and Asp-631.

It belongs to the SecA family. Monomer and homodimer. Part of the essential Sec protein translocation apparatus which comprises SecA, SecYEG and auxiliary proteins SecDF. Other proteins may also be involved.

Its subcellular location is the cell inner membrane. It localises to the cytoplasm. It catalyses the reaction ATP + H2O + cellular proteinSide 1 = ADP + phosphate + cellular proteinSide 2.. In terms of biological role, part of the Sec protein translocase complex. Interacts with the SecYEG preprotein conducting channel. Has a central role in coupling the hydrolysis of ATP to the transfer of proteins into and across the cell membrane, serving as an ATP-driven molecular motor driving the stepwise translocation of polypeptide chains across the membrane. The sequence is that of Protein translocase subunit SecA from Chlamydia pneumoniae (Chlamydophila pneumoniae).